A 415-amino-acid chain; its full sequence is Tumor necrosis factor receptor superfamily member 3 (415 aa).

The N-terminal stretch at 1-30 (MRLPRASSPCGLAWGPLLLGLSGLLVASQP) is a signal peptide. The Extracellular portion of the chain corresponds to 31-223 (QLVPPYRIEN…NPPEPGAMLL (193 aa)). Residue N40 is glycosylated (N-linked (GlcNAc...) asparagine). 4 TNFR-Cys repeats span residues 42–81 (TCWD…TVCK), 82–124 (TCPH…KAEC), 125–170 (RCQP…VNCV), and 171–213 (PCKP…TICK). 10 disulfide bridges follow: C43-C58, C59-C72, C62-C80, C83-C98, C101-C116, C104-C124, C126-C132, C139-C150, C142-C169, and C172-C187. N179 is a glycosylation site (N-linked (GlcNAc...) asparagine). The helical transmembrane segment at 224–244 (LAILLSLVLFLLFTTVLACAW) threads the bilayer. Topologically, residues 245 to 415 (MRHPSLCRKL…ETETLGCQDL (171 aa)) are cytoplasmic. The disordered stretch occupies residues 261-304 (HPEGEESPPCPAPRADPHFPDLAEPLLPMSGDLSPSPAGPPTAP). A Phosphoserine modification is found at S315. The segment at 361 to 399 (LGGTRGPGDPPAPPEPPYPTPEEGAPGPSELSTPYQEDG) is disordered. Residues 368–380 (GDPPAPPEPPYPT) show a composition bias toward pro residues.

Self-associates; dimerization and trimerization are promoted by lymphotoxin (LTA(3)). Associates with TRAF3. Associates with TRAF4. Associates with TRAF5.

It localises to the membrane. Receptor for the heterotrimeric lymphotoxin containing LTA and LTB, and for TNFS14/LIGHT. Activates NF-kappa-B signaling upon stimulation with lymphotoxin. Promotes apoptosis via TRAF3 and TRAF5. May play a role in the development of lymphoid organs. Its function is as follows. (Microbial infection) Plays a role in host defense against Zika virus infection. The protein is Tumor necrosis factor receptor superfamily member 3 (Ltbr) of Mus musculus (Mouse).